Here is a 290-residue protein sequence, read N- to C-terminus: 4-hydroxy-tetrahydrodipicolinate synthase (290 aa).

Thr-44 is a binding site for pyruvate. Residue Tyr-132 is the Proton donor/acceptor of the active site. Lys-160 serves as the catalytic Schiff-base intermediate with substrate. Pyruvate is bound at residue Ile-202.

The protein belongs to the DapA family. Homotetramer; dimer of dimers.

The protein resides in the cytoplasm. It carries out the reaction L-aspartate 4-semialdehyde + pyruvate = (2S,4S)-4-hydroxy-2,3,4,5-tetrahydrodipicolinate + H2O + H(+). It participates in amino-acid biosynthesis; L-lysine biosynthesis via DAP pathway; (S)-tetrahydrodipicolinate from L-aspartate: step 3/4. Its function is as follows. Catalyzes the condensation of (S)-aspartate-beta-semialdehyde [(S)-ASA] and pyruvate to 4-hydroxy-tetrahydrodipicolinate (HTPA). In Legionella pneumophila (strain Corby), this protein is 4-hydroxy-tetrahydrodipicolinate synthase.